The following is a 482-amino-acid chain: ATP synthase subunit beta (482 aa).

ATP is bound at residue glycine 167 to threonine 174.

The protein belongs to the ATPase alpha/beta chains family. As to quaternary structure, F-type ATPases have 2 components, CF(1) - the catalytic core - and CF(0) - the membrane proton channel. CF(1) has five subunits: alpha(3), beta(3), gamma(1), delta(1), epsilon(1). CF(0) has three main subunits: a(1), b(2) and c(9-12). The alpha and beta chains form an alternating ring which encloses part of the gamma chain. CF(1) is attached to CF(0) by a central stalk formed by the gamma and epsilon chains, while a peripheral stalk is formed by the delta and b chains.

The protein localises to the cell membrane. It carries out the reaction ATP + H2O + 4 H(+)(in) = ADP + phosphate + 5 H(+)(out). Its function is as follows. Produces ATP from ADP in the presence of a proton gradient across the membrane. The catalytic sites are hosted primarily by the beta subunits. The protein is ATP synthase subunit beta of Corynebacterium aurimucosum (strain ATCC 700975 / DSM 44827 / CIP 107346 / CN-1) (Corynebacterium nigricans).